The primary structure comprises 265 residues: Exosome complex component Rrp4 (265 aa).

Positions 65-137 (GDNVIGKIVD…EVNNIDLTTK (73 aa)) constitute an S1 motif domain. Positions 147–205 (KGGQIVKITPSRVPRVIGRGGSMINMIKKLTMTRIIVGQNGWIWVSGKNDALEKLAIEA) constitute a KH domain. The interval 241 to 265 (EIPKLEEEPQGEDEVNGNDGEARGA) is disordered.

The protein belongs to the RRP4 family. In terms of assembly, component of the archaeal exosome complex. Forms a trimer of Rrp4 and/or Csl4 subunits. The trimer associates with a hexameric ring-like arrangement composed of 3 Rrp41-Rrp42 heterodimers.

It localises to the cytoplasm. Non-catalytic component of the exosome, which is a complex involved in RNA degradation. Increases the RNA binding and the efficiency of RNA degradation. Confers strong poly(A) specificity to the exosome. The protein is Exosome complex component Rrp4 of Pyrococcus abyssi (strain GE5 / Orsay).